We begin with the raw amino-acid sequence, 94 residues long: Large ribosomal subunit protein bL25 (94 aa).

It belongs to the bacterial ribosomal protein bL25 family. As to quaternary structure, part of the 50S ribosomal subunit; part of the 5S rRNA/L5/L18/L25 subcomplex. Contacts the 5S rRNA. Binds to the 5S rRNA independently of L5 and L18.

Its function is as follows. This is one of the proteins that binds to the 5S RNA in the ribosome where it forms part of the central protuberance. The protein is Large ribosomal subunit protein bL25 of Salmonella agona (strain SL483).